Here is a 156-residue protein sequence, read N- to C-terminus: Enhancer of split M1 protein (156 aa).

An N-terminal signal peptide occupies residues 1–19; sequence MMSQTLTLCCLGLVACVYG. Kazal-like domains are found at residues 23 to 81 and 96 to 156; these read STND…AWCS and KLEV…EEKC. 5 disulfides stabilise this stretch: Cys29–Cys62, Cys33–Cys55, Cys102–Cys135, Cys106–Cys128, and Cys114–Cys156.

The sequence is that of Enhancer of split M1 protein from Drosophila simulans (Fruit fly).